A 138-amino-acid chain; its full sequence is Basic phospholipase A2 chain HDP-1P (138 aa).

The N-terminal stretch at 1–16 (MRILWIVAVCLIGVEG) is a signal peptide. 7 disulfide bridges follow: cysteine 42/cysteine 131, cysteine 44/cysteine 60, cysteine 59/cysteine 111, cysteine 65/cysteine 138, cysteine 66/cysteine 104, cysteine 73/cysteine 97, and cysteine 91/cysteine 102. Ca(2+) is bound by residues tyrosine 43, glycine 45, and glycine 47. Residue histidine 63 is part of the active site. Position 64 (aspartate 64) interacts with Ca(2+). The active site involves aspartate 105.

Heterodimer; non-covalently linked. The toxic basic protein has phospholipase A2 activity (chain HDP-1P) and the non-toxic acidic protein functions as its inhibitor (chain HPD-1I (AC A4VBF0)). Requires Ca(2+) as cofactor. As to expression, expressed by the venom gland.

It is found in the secreted. The catalysed reaction is a 1,2-diacyl-sn-glycero-3-phosphocholine + H2O = a 1-acyl-sn-glycero-3-phosphocholine + a fatty acid + H(+). Its activity is regulated as follows. Enzymatic activity and neurotoxicity are inhibited by Triton X-100, which has been determined to be located in the center of the hydrophobic channel of the enzyme. Heterodimer: shows the same activities as the monomer, but with a lower potency. In terms of biological role, monomer: snake venom phospholipase A2 (PLA2) that shows presynaptic neurotoxicity, anticoagulant activity and that weakly inhibits ADP-induced platelet aggregation. Inhibits exocytosis in pancreatic beta cells, confirming it can act presynaptically in inhibiting the exocytosis of neurotransmitters in neurons. PLA2 catalyzes the calcium-dependent hydrolysis of the 2-acyl groups in 3-sn-phosphoglycerides. The protein is Basic phospholipase A2 chain HDP-1P of Vipera nikolskii (Nikolsky's adder).